The sequence spans 381 residues: Chorismate synthase (381 aa).

NADP(+)-binding residues include Arg-39 and Arg-45. Residues 127–129, 248–249, Gly-293, 308–312, and Arg-334 each bind FMN; these read RAS, QS, and KPIPT.

It belongs to the chorismate synthase family. Homotetramer. FMNH2 is required as a cofactor.

It catalyses the reaction 5-O-(1-carboxyvinyl)-3-phosphoshikimate = chorismate + phosphate. It functions in the pathway metabolic intermediate biosynthesis; chorismate biosynthesis; chorismate from D-erythrose 4-phosphate and phosphoenolpyruvate: step 7/7. Functionally, catalyzes the anti-1,4-elimination of the C-3 phosphate and the C-6 proR hydrogen from 5-enolpyruvylshikimate-3-phosphate (EPSP) to yield chorismate, which is the branch point compound that serves as the starting substrate for the three terminal pathways of aromatic amino acid biosynthesis. This reaction introduces a second double bond into the aromatic ring system. The protein is Chorismate synthase of Caldicellulosiruptor saccharolyticus (strain ATCC 43494 / DSM 8903 / Tp8T 6331).